A 78-amino-acid polypeptide reads, in one-letter code: Putative membrane protein insertion efficiency factor (78 aa).

Belongs to the UPF0161 family.

The protein resides in the cell inner membrane. Functionally, could be involved in insertion of integral membrane proteins into the membrane. The polypeptide is Putative membrane protein insertion efficiency factor (Roseobacter denitrificans (strain ATCC 33942 / OCh 114) (Erythrobacter sp. (strain OCh 114))).